We begin with the raw amino-acid sequence, 451 residues long: Alpha-galactosidase (451 aa).

5–71 (PKITFIGAGS…ASGKITCHTQ (67 aa)) is a binding site for NAD(+). Asn151 serves as a coordination point for substrate. Cys173 serves as a coordination point for Mn(2+). His174 acts as the Proton donor in catalysis. His203 is a Mn(2+) binding site. Arg287 is a binding site for substrate.

Belongs to the glycosyl hydrolase 4 family. Homodimer. NAD(+) is required as a cofactor. The cofactor is Mn(2+).

The catalysed reaction is Hydrolysis of terminal, non-reducing alpha-D-galactose residues in alpha-D-galactosides, including galactose oligosaccharides, galactomannans and galactolipids.. The sequence is that of Alpha-galactosidase (melA) from Escherichia coli (strain K12).